A 365-amino-acid chain; its full sequence is MAIMAPRTLLLLLSGALALTQTWAGSHSMRYFSTSVSRPGRGEPRFIAVGYVDDTQFVRFDSDAASQRMEPRTPWMEQEGPEYWDRETRSVKAHAQTNRVDLGTLRGYYNQSDGGSHTIQRMFGCDVGPDGRFLRGYEQHAYDGKDYIALNEDLRSWTAADMAAQITQRKWEAAGAAEQDRAYLEGLCVESLRRYLENGKETLQRTDAPKTHMTHHPVSDHEATLRCWALGFYPAEITLTWQRDGEDQTQDTELVETRPAGDGTFQKWAAVVVPSGKEQRYTCHVQHEGLPEPLTLRWELSSQPTIPIVGIIAGLVLLGAVITGAVVAAVMWRRRNSDRKGGSYSQAASNDSAQGSDVSLTACKV.

The signal sequence occupies residues Met1–Ala24. The interval Gly25 to Gly114 is alpha-1. Residues Gly25 to Ile308 are Extracellular-facing. N-linked (GlcNAc...) asparagine glycosylation occurs at Asn110. The interval Gly115–Thr206 is alpha-2. Cystine bridges form between Cys125/Cys188 and Cys227/Cys283. The alpha-3 stretch occupies residues Asp207 to Trp298. Residues Pro209–Arg297 form the Ig-like C1-type domain. The interval Glu299–Ile308 is connecting peptide. Residues Val309–Trp332 form a helical membrane-spanning segment. Residues Arg333–Val365 lie on the Cytoplasmic side of the membrane. Positions Lys340–Val365 are disordered. Ser343 bears the Phosphoserine mark. The segment covering Ser343–Ser359 has biased composition (polar residues). Phosphotyrosine is present on Tyr344. 5 positions are modified to phosphoserine: Ser345, Ser349, Ser352, Ser356, and Ser359.

The protein belongs to the MHC class I family. In terms of assembly, heterodimer of an alpha chain and a beta chain (beta-2-microglobulin).

The protein resides in the membrane. Involved in the presentation of foreign antigens to the immune system. The sequence is that of Popy Class I histocompatibility antigen, A-1 alpha chain from Pongo pygmaeus (Bornean orangutan).